A 233-amino-acid chain; its full sequence is Large ribosomal subunit protein uL1 (233 aa).

The protein belongs to the universal ribosomal protein uL1 family. In terms of assembly, part of the 50S ribosomal subunit.

In terms of biological role, binds directly to 23S rRNA. The L1 stalk is quite mobile in the ribosome, and is involved in E site tRNA release. Its function is as follows. Protein L1 is also a translational repressor protein, it controls the translation of the L11 operon by binding to its mRNA. In Rhodospirillum rubrum (strain ATCC 11170 / ATH 1.1.1 / DSM 467 / LMG 4362 / NCIMB 8255 / S1), this protein is Large ribosomal subunit protein uL1.